We begin with the raw amino-acid sequence, 226 residues long: Phosphatidylserine decarboxylase proenzyme (226 aa).

The active-site Schiff-base intermediate with substrate; via pyruvic acid is serine 184. Serine 184 bears the Pyruvic acid (Ser); by autocatalysis mark.

This sequence belongs to the phosphatidylserine decarboxylase family. PSD-A subfamily. Heterodimer of a large membrane-associated beta subunit and a small pyruvoyl-containing alpha subunit. Pyruvate is required as a cofactor. In terms of processing, is synthesized initially as an inactive proenzyme. Formation of the active enzyme involves a self-maturation process in which the active site pyruvoyl group is generated from an internal serine residue via an autocatalytic post-translational modification. Two non-identical subunits are generated from the proenzyme in this reaction, and the pyruvate is formed at the N-terminus of the alpha chain, which is derived from the carboxyl end of the proenzyme. The post-translation cleavage follows an unusual pathway, termed non-hydrolytic serinolysis, in which the side chain hydroxyl group of the serine supplies its oxygen atom to form the C-terminus of the beta chain, while the remainder of the serine residue undergoes an oxidative deamination to produce ammonia and the pyruvoyl prosthetic group on the alpha chain.

It localises to the cell membrane. It catalyses the reaction a 1,2-diacyl-sn-glycero-3-phospho-L-serine + H(+) = a 1,2-diacyl-sn-glycero-3-phosphoethanolamine + CO2. The protein operates within phospholipid metabolism; phosphatidylethanolamine biosynthesis; phosphatidylethanolamine from CDP-diacylglycerol: step 2/2. Its function is as follows. Catalyzes the formation of phosphatidylethanolamine (PtdEtn) from phosphatidylserine (PtdSer). The sequence is that of Phosphatidylserine decarboxylase proenzyme from Ehrlichia canis (strain Jake).